Here is a 299-residue protein sequence, read N- to C-terminus: Trans-aconitate 3-methyltransferase (299 aa).

Ser-2 is subject to N-acetylserine.

This sequence belongs to the methyltransferase superfamily. Tam family.

Its subcellular location is the cytoplasm. The catalysed reaction is trans-aconitate + S-adenosyl-L-methionine = (E)-2-(methoxycarbonylmethyl)but-2-enedioate + S-adenosyl-L-homocysteine. Catalyzes the S-adenosylmethionine monomethyl esterification of trans-aconitate and 3-isopropylmalate at high affinity and of other molecules like cis-aconitate, isocitrate, and citrate at lower velocities and affinities. The function of trans-aconitate methylation appears to be in reducing the toxicity of this spontaneous breakdown product of cis-aconitate. The role of 3-isopropylmalate methylation is unclear but may represent a metabolic branch at 3-isopropylmalate, where some of the material is taken in the pathway leading to leucine and some is taken in a pathway to the 3-isopropylmalate methyl ester, a molecule that provides a signal to switch from vegetative to invasive growth in response to amino acid starvation. The polypeptide is Trans-aconitate 3-methyltransferase (TMT1) (Saccharomyces cerevisiae (strain YJM789) (Baker's yeast)).